The sequence spans 160 residues: Major strawberry allergen Fra a 1-2 (160 aa).

The protein belongs to the BetVI family. Monomer. Interacts with AP. In terms of tissue distribution, highly expressed in ripe red fruits. Expressed in roots and white fruits. Expressed at low levels in open flowers.

Its function is as follows. Involved in the control of flavonoid biosynthesis in fruits, probably by binding directly to natural flavonoids. Binds the natural flavonoid myricetin with affinities in the low micromolar range. This is Major strawberry allergen Fra a 1-2 from Fragaria ananassa (Strawberry).